Reading from the N-terminus, the 630-residue chain is Protein phosphatase 2C-like domain-containing protein 1 (630 aa).

One can recognise a PPM-type phosphatase domain in the interval 170–621 (GVGICEDRNS…DNITVMVIFL (452 aa)). Over residues 557 to 569 (TTHRKPCSEKVTD) the composition is skewed to basic and acidic residues. The interval 557 to 578 (TTHRKPCSEKVTDRPTSVNDVA) is disordered.

Belongs to the PP2C family.

The protein is Protein phosphatase 2C-like domain-containing protein 1 (PP2D1) of Homo sapiens (Human).